The sequence spans 122 residues: Large ribosomal subunit protein uL24 (122 aa).

The protein belongs to the universal ribosomal protein uL24 family. Part of the 50S ribosomal subunit.

One of two assembly initiator proteins, it binds directly to the 5'-end of the 23S rRNA, where it nucleates assembly of the 50S subunit. Functionally, located at the polypeptide exit tunnel on the outside of the subunit. The polypeptide is Large ribosomal subunit protein uL24 (Pyrobaculum arsenaticum (strain DSM 13514 / JCM 11321 / PZ6)).